We begin with the raw amino-acid sequence, 250 residues long: High affinity immunoglobulin epsilon receptor subunit alpha (250 aa).

A signal peptide spans 1–23; the sequence is MVTGRSAQLCLALLFMSLDVILT. Residues 24-204 lie on the Extracellular side of the membrane; the sequence is ATEKSVLTLD…AYKCKYYWLQ (181 aa). The Ig-like 1 domain maps to 28–104; sequence SVLTLDPPWI…QGLFKSKPVY (77 aa). An intrachain disulfide couples Cys49 to Cys92. N-linked (GlcNAc...) asparagine glycans are attached at residues Asn58, Asn66, Asn73, Asn106, Asn152, and Asn167. Residues 114-181 enclose the Ig-like 2 domain; it reads LQTSADMVLV…YHCKGYLRQV (68 aa). Residues Cys131 and Cys174 are joined by a disulfide bond. Residues 205-223 form a helical membrane-spanning segment; sequence LIFPLLVAILFAVDTGLLL. The Cytoplasmic segment spans residues 224–250; the sequence is STEEQFKSVLEIQKTGKYKKVETELLT.

In terms of assembly, tetramer of an alpha chain, a beta chain, and two disulfide linked gamma chains. Interacts with IGHE (via CH3 region). Expressed in bone marrow mast cells, as well as in the pineal gland at night.

The protein localises to the cell membrane. In terms of biological role, high-affinity receptor for immunoglobulin epsilon/IgE. Mediates IgE effector functions in myeloid cells. Upon IgE binding and antigen/allergen cross-linking initiates signaling pathways that lead to myeloid cell activation and differentiation. On mast cells, basophils and eosinophils stimulates the secretion of vasoactive amines, lipid mediators and cytokines that contribute to inflammatory response, tissue remodeling and cytotoxicity against microbes. Triggers the immediate hypersensitivity response to allergens as a host defense mechanism against helminth parasites, pathogenic bacteria and venom toxicity. When dysregulated, it can elicit harmful life-threatening allergic and anaphylactic reactions. The polypeptide is High affinity immunoglobulin epsilon receptor subunit alpha (Fcer1a) (Mus musculus (Mouse)).